The primary structure comprises 249 residues: Small ribosomal subunit protein uS2 (249 aa).

This sequence belongs to the universal ribosomal protein uS2 family.

The protein is Small ribosomal subunit protein uS2 of Listeria monocytogenes serovar 1/2a (strain ATCC BAA-679 / EGD-e).